The primary structure comprises 250 residues: Uracil-DNA glycosylase (250 aa).

Residue aspartate 78 is the Proton acceptor of the active site. Positions 228 to 250 are disordered; it reads RGQKPVDWSGEQNNASRQGKFAL.

Belongs to the uracil-DNA glycosylase (UDG) superfamily. UNG family.

Its subcellular location is the cytoplasm. The catalysed reaction is Hydrolyzes single-stranded DNA or mismatched double-stranded DNA and polynucleotides, releasing free uracil.. Its function is as follows. Excises uracil residues from the DNA which can arise as a result of misincorporation of dUMP residues by DNA polymerase or due to deamination of cytosine. The chain is Uracil-DNA glycosylase from Bordetella bronchiseptica (strain ATCC BAA-588 / NCTC 13252 / RB50) (Alcaligenes bronchisepticus).